Here is a 555-residue protein sequence, read N- to C-terminus: MKTDIEIAQAADIQPITKIAEKIGLSFDDIELYGKYKAKIPLEVLDKFDQQSEGKLVLVTSINPTPAGEGKSTVTVGLADAFARQGKNVMVALREPSLGPVMGIKGGAAGGGFAQVLPMEDINLHFTGDIHAITTANNAISAFLDNSLHQGNPLNIDPRRIIWKRVVDLNDRALRHVTVGLGGPLNGVPREDGFDITVVSEIMAVLCLATSISDLKERLGKIVLAQSYDRKPVTLGDLGVQGAIAMLLKDALKPNLVQTIEGTPALIHGGPFANIAHGCNSVLATKTALKLSDIVITEAGFGADLGGEKFLDIKTRQLGKQPDAVVIVATLRALKMHGGLDKKELTKENVEAVKKGFANLERHIKNMQSYGLPVIVAINEFASDTKSEISALKDLTEALGVPVSLTQVFAKGGEGGLDLAEKLSGMLQEKSDFSYLYDLKEPLSAKIDKVVTEIYGGSKVNYSPKAKRQMREIEENGWNDLPVCMAKTQYSFSDQPNLLAAPEGFEVTVRELLPKIGAGFIVALLGDVMTMPGLPKNPASLKMDVTDDGKISGLF.

65-72 is a binding site for ATP; the sequence is TPAGEGKS.

This sequence belongs to the formate--tetrahydrofolate ligase family.

The catalysed reaction is (6S)-5,6,7,8-tetrahydrofolate + formate + ATP = (6R)-10-formyltetrahydrofolate + ADP + phosphate. The protein operates within one-carbon metabolism; tetrahydrofolate interconversion. The sequence is that of Formate--tetrahydrofolate ligase from Lactococcus lactis subsp. lactis (strain IL1403) (Streptococcus lactis).